The following is a 748-amino-acid chain: Meprin A subunit alpha (748 aa).

Positions 1-20 are cleaved as a signal peptide; sequence MLWTLPVCLLSLSFSAHIAA. The propeptide occupies 21–66; sequence VSIQHLSTGHDHDDVDVGEQQKDISEINSAAGLNLFQGDILLPRTR. In terms of domain architecture, Peptidase M12A spans 67 to 261; the sequence is NALRDPSSRW…TRLNRMYNCT (195 aa). The Extracellular portion of the chain corresponds to 67-719; sequence NALRDPSSRW…RCQAMHVHGS (653 aa). Disulfide bonds link Cys-108–Cys-260, Cys-129–Cys-148, and Cys-270–Cys-432. A glycan (N-linked (GlcNAc...) asparagine) is linked at Asn-141. His-156 serves as a coordination point for Zn(2+). The active site involves Glu-157. Residues His-160 and His-166 each contribute to the Zn(2+) site. Residues Asn-223, Asn-259, Asn-319, Asn-441, and Asn-542 are each glycosylated (N-linked (GlcNAc...) asparagine). An MAM domain is found at 265-434; sequence TLLDHCAFEK…ITLTETPCPT (170 aa). In terms of domain architecture, MATH spans 435–596; it reads GVWTIRNISQ…DDTLIIFVDF (162 aa). Residues 641–668 form a disordered region; the sequence is LPRRLDQRQPSRPKRSVENTGPMEDHNW. The region spanning 672–712 is the EGF-like domain; that stretch reads FRDPCDPNPCQNEGTCVNVKGMASCRCVSGHAFFYTGERCQ. Intrachain disulfides connect Cys-676–Cys-687, Cys-681–Cys-696, and Cys-698–Cys-711. Residues 720–739 form a helical membrane-spanning segment; it reads LLGLLIGCITALIFLTFITF. Over 740–748 the chain is Cytoplasmic; sequence SNTYQKLRQ.

Homotetramer consisting of disulfide-linked alpha subunits, homooligomer consisting of disulfide-linked alpha subunit homodimers, or heterotetramer of two alpha and two beta subunits formed by non-covalent association of two disulfide-linked heterodimers. Interacts with MBL2 through its carbohydrate moiety. This interaction may inhibit its catalytic activity. It depends on Zn(2+) as a cofactor. Post-translationally, N-glycosylated; contains GlcNAc, galactose, mannose and a small amount of fucose. Colocalized with E-24.11 in proximal tubules of juxtamedullary nephrons.

It is found in the membrane. The enzyme catalyses Hydrolysis of protein and peptide substrates preferentially on carboxyl side of hydrophobic residues.. Its activity is regulated as follows. Inhibited by actinonin. This chain is Meprin A subunit alpha (Mep1a), found in Rattus norvegicus (Rat).